Reading from the N-terminus, the 689-residue chain is Protein CFAP20DC (689 aa).

Disordered stretches follow at residues 241–263 (LKST…NRIE), 333–423 (SKES…GPSE), and 584–659 (ISTS…DLSV). Composition is skewed to polar residues over residues 251-260 (TPSGSSSGNN) and 343-359 (EESQ…SSRP). The segment covering 394–405 (SEDDFYGGDSSE) has biased composition (acidic residues). A compositionally biased stretch (polar residues) spans 409–421 (HSIQGSRGPTTGP). Over residues 584–593 (ISTSSDDTTT) the composition is skewed to low complexity.

The chain is Protein CFAP20DC from Homo sapiens (Human).